A 291-amino-acid chain; its full sequence is Elongation factor Ts, mitochondrial (291 aa).

It belongs to the EF-Ts family.

The protein localises to the mitochondrion. Associates with the EF-Tu.GDP complex and induces the exchange of GDP to GTP. It remains bound to the aminoacyl-tRNA.EF-Tu.GTP complex up to the GTP hydrolysis stage on the ribosome. This chain is Elongation factor Ts, mitochondrial, found in Nematostella vectensis (Starlet sea anemone).